Consider the following 275-residue polypeptide: NH(3)-dependent NAD(+) synthetase (275 aa).

46-53 serves as a coordination point for ATP; sequence GISGGQDS. Residue aspartate 52 participates in Mg(2+) binding. Position 140 (arginine 140) interacts with deamido-NAD(+). Threonine 160 provides a ligand contact to ATP. A Mg(2+)-binding site is contributed by glutamate 165. 2 residues coordinate deamido-NAD(+): lysine 173 and aspartate 180. ATP-binding residues include lysine 189 and threonine 211. 260–261 is a binding site for deamido-NAD(+); that stretch reads HK.

Belongs to the NAD synthetase family. As to quaternary structure, homodimer.

It catalyses the reaction deamido-NAD(+) + NH4(+) + ATP = AMP + diphosphate + NAD(+) + H(+). It functions in the pathway cofactor biosynthesis; NAD(+) biosynthesis; NAD(+) from deamido-NAD(+) (ammonia route): step 1/1. In terms of biological role, catalyzes the ATP-dependent amidation of deamido-NAD to form NAD. Uses ammonia as a nitrogen source. The chain is NH(3)-dependent NAD(+) synthetase from Escherichia fergusonii (strain ATCC 35469 / DSM 13698 / CCUG 18766 / IAM 14443 / JCM 21226 / LMG 7866 / NBRC 102419 / NCTC 12128 / CDC 0568-73).